A 1800-amino-acid polypeptide reads, in one-letter code: U3 small nucleolar RNA-associated protein 10 (1800 aa).

HEAT repeat units follow at residues Phe426–Ala467 and Asp581–Lys619. Helical transmembrane passes span Ile944–Asn964 and Ala1000–Met1020. HEAT repeat units follow at residues Asp1043–His1081, Thr1250–Glu1288, Gln1294–Arg1333, and Leu1755–Glu1793.

This sequence belongs to the HEATR1/UTP10 family. As to quaternary structure, component of the ribosomal small subunit (SSU) processome.

The protein resides in the nucleus. The protein localises to the nucleolus. It localises to the membrane. In terms of biological role, involved in nucleolar processing of pre-18S ribosomal RNA. Involved in ribosome biosynthesis. In Aspergillus niger (strain ATCC MYA-4892 / CBS 513.88 / FGSC A1513), this protein is U3 small nucleolar RNA-associated protein 10.